The following is a 728-amino-acid chain: 1,4-alpha-glucan branching enzyme GlgB (728 aa).

Aspartate 405 (nucleophile) is an active-site residue. Glutamate 458 (proton donor) is an active-site residue.

Belongs to the glycosyl hydrolase 13 family. GlgB subfamily. Monomer.

It carries out the reaction Transfers a segment of a (1-&gt;4)-alpha-D-glucan chain to a primary hydroxy group in a similar glucan chain.. The protein operates within glycan biosynthesis; glycogen biosynthesis. In terms of biological role, catalyzes the formation of the alpha-1,6-glucosidic linkages in glycogen by scission of a 1,4-alpha-linked oligosaccharide from growing alpha-1,4-glucan chains and the subsequent attachment of the oligosaccharide to the alpha-1,6 position. This Shigella flexneri serotype 5b (strain 8401) protein is 1,4-alpha-glucan branching enzyme GlgB.